Here is a 150-residue protein sequence, read N- to C-terminus: Monothiol glutaredoxin-S13 (150 aa).

The segment at P30 to N52 is disordered. Residues S31–S44 are compositionally biased toward low complexity. Positions K53–W149 constitute a Glutaredoxin domain. C73 lines the [2Fe-2S] cluster pocket. The Responsive for interaction with TGA factors motif lies at A147 to L150.

Belongs to the glutaredoxin family. CC-type subfamily.

It localises to the cytoplasm. The protein resides in the nucleus. Functionally, may only reduce GSH-thiol disulfides, but not protein disulfides. This is Monothiol glutaredoxin-S13 (GRXS13) from Arabidopsis thaliana (Mouse-ear cress).